The following is a 137-amino-acid chain: Large ribosomal subunit protein uL14 (137 aa).

This sequence belongs to the universal ribosomal protein uL14 family. As to quaternary structure, component of the large ribosomal subunit. Mature ribosomes consist of a small (40S) and a large (60S) subunit. The 40S subunit contains about 32 different proteins and 1 molecule of RNA (18S). The 60S subunit contains 45 different proteins and 3 molecules of RNA (25S, 5.8S and 5S).

The protein localises to the cytoplasm. Its function is as follows. Component of the ribosome, a large ribonucleoprotein complex responsible for the synthesis of proteins in the cell. The small ribosomal subunit (SSU) binds messenger RNAs (mRNAs) and translates the encoded message by selecting cognate aminoacyl-transfer RNA (tRNA) molecules. The large subunit (LSU) contains the ribosomal catalytic site termed the peptidyl transferase center (PTC), which catalyzes the formation of peptide bonds, thereby polymerizing the amino acids delivered by tRNAs into a polypeptide chain. The nascent polypeptides leave the ribosome through a tunnel in the LSU and interact with protein factors that function in enzymatic processing, targeting, and the membrane insertion of nascent chains at the exit of the ribosomal tunnel. This chain is Large ribosomal subunit protein uL14, found in Candida albicans (strain SC5314 / ATCC MYA-2876) (Yeast).